A 463-amino-acid polypeptide reads, in one-letter code: MHEKLTTRFAPSPTGYLHIGGLRTALYNYLYARKNGGNFLLRIEDTDLKRNSKEATKAIIEAFKWCGLEHDGEVTYQSERFDLYKEYVKKLLDEGKAYYCYMSKEELEELRAKQEAAKERPRYDGRYREFTGTPPQGIEPVVRIKAPQSGEIVFEDGVKGEVRFKAEDIMDDFIIARSDGTPTYNFTVVIDDALMGVSDVIRGDDHLSNTPKQIVLYEALGFKIPKFFHVAMIHGEDGKKLSKRHGATDVMEYKEMGILPQALLNFLVRLGWSHGDDEVFSLEDLKKLFDPYHINKSASCYNAKKLEWLNAHYIKTLPFEEINRQLKDLGFDLSVYEKAGFLLDLLRERAKTLHDIINGAKSIVNAPQNYDENAVQKFVNENNLELLQAFANTLKDQKTGKDFEDFTNDFLEKKEAKLKDLAQPIRIALTGSAVSPSIFEVLEFLGVDECKKRIDNFLKVRGK.

The short motif at Pro11–Gly21 is the 'HIGH' region element. Positions Lys240–Arg244 match the 'KMSKS' region motif. Position 243 (Lys243) interacts with ATP.

The protein belongs to the class-I aminoacyl-tRNA synthetase family. Glutamate--tRNA ligase type 1 subfamily. Monomer.

Its subcellular location is the cytoplasm. It carries out the reaction tRNA(Glu) + L-glutamate + ATP = L-glutamyl-tRNA(Glu) + AMP + diphosphate. In terms of biological role, catalyzes the attachment of glutamate to tRNA(Glu) in a two-step reaction: glutamate is first activated by ATP to form Glu-AMP and then transferred to the acceptor end of tRNA(Glu). This is Glutamate--tRNA ligase 2 from Campylobacter jejuni subsp. jejuni serotype O:6 (strain 81116 / NCTC 11828).